The sequence spans 342 residues: Ferredoxin--NADP reductase (342 aa).

FAD contacts are provided by Cys17, Asp36, Gln44, Tyr49, Val89, Phe124, Asp289, and Thr330.

The protein belongs to the ferredoxin--NADP reductase type 2 family. Homodimer. Requires FAD as cofactor.

The catalysed reaction is 2 reduced [2Fe-2S]-[ferredoxin] + NADP(+) + H(+) = 2 oxidized [2Fe-2S]-[ferredoxin] + NADPH. In Bradyrhizobium sp. (strain ORS 278), this protein is Ferredoxin--NADP reductase.